Consider the following 1719-residue polypeptide: Serine/threonine-protein kinase MRCK alpha (1719 aa).

Positions 77–343 (FEILKVIGRG…IEDFKKHPFF (267 aa)) constitute a Protein kinase domain. ATP contacts are provided by residues 83 to 91 (IGRGAFGEV) and lysine 106. Aspartate 201 serves as the catalytic Proton acceptor. Serine 222 and serine 234 each carry phosphoserine; by autocatalysis. At threonine 240 the chain carries Phosphothreonine; by autocatalysis. The AGC-kinase C-terminal domain occupies 344–414 (SGIDWDNIRN…TSSCVLSDRS (71 aa)). Coiled coils occupy residues 437-670 (NNLA…KQKQ), 713-820 (SEIK…WEAQ), and 880-943 (LELQ…SEKG). The segment at 999–1049 (THQFFVKSFTAPTKCHQCTSLMVGLIRQGCSCEVCGFSCHITCVNKAPTVC) adopts a Phorbol-ester/DAG-type zinc-finger fold. The PH domain maps to 1069–1188 (GTAYEGHVRI…WVGVLSELHK (120 aa)). Residues 1214–1486 (IKTTQAAAII…RPLNTEGSLN (273 aa)) enclose the CNH domain. A Phosphoserine modification is found at serine 1532. One can recognise a CRIB domain in the interval 1558-1571 (ISNPTNFNHIAHMG). The interval 1579–1719 (LKDLPMNPRP…ESTDRGSWDP (141 aa)) is disordered. Residues 1591-1606 (SRTVFSGSVSIPSITK) show a composition bias toward polar residues. Phosphoserine occurs at positions 1598, 1600, 1616, 1638, 1651, 1656, 1680, 1706, and 1708. Low complexity predominate over residues 1612–1627 (GRSMSASSGLSARSSA). The span at 1652 to 1661 (PSEGSLSSGG) shows a compositional bias: low complexity.

The protein belongs to the protein kinase superfamily. AGC Ser/Thr protein kinase family. DMPK subfamily. In terms of assembly, homodimer and homotetramer via the coiled coil regions. Interacts tightly with GTP-bound but not GDP-bound CDC42. Forms a tripartite complex with MYO18A and LRP35A with the latter acting as an adapter connecting CDC42BPA and MYO18A. LRP35A binding results in activation of CDC42BPA by abolition of its negative autoregulation. Interacts with LURAP1. Interacts (via AGC-kinase C-terminal domain) with FAM89B/LRAP25 (via LRR repeat). Forms a tripartite complex with FAM89B/LRAP25 and LIMK1. It depends on Mg(2+) as a cofactor. Post-translationally, proteolytically cleaved by caspases upon apoptosis induction. The cleavage at Asp-478 by CASP3 increases its kinase activity (in vitro).

It localises to the cytoplasm. The protein localises to the cell projection. It is found in the lamellipodium. It carries out the reaction L-seryl-[protein] + ATP = O-phospho-L-seryl-[protein] + ADP + H(+). The enzyme catalyses L-threonyl-[protein] + ATP = O-phospho-L-threonyl-[protein] + ADP + H(+). Its activity is regulated as follows. Maintained in an inactive, closed conformation by an interaction between the kinase domain and the negative autoregulatory C-terminal coiled-coil region. Agonist binding to the phorbol ester binding site disrupts this, releasing the kinase domain to allow N-terminus-mediated dimerization and kinase activation by transautophosphorylation. Inhibited by chelerythrine chloride. Its function is as follows. Serine/threonine-protein kinase which is an important downstream effector of CDC42 and plays a role in the regulation of cytoskeleton reorganization and cell migration. Regulates actin cytoskeletal reorganization via phosphorylation of PPP1R12C and MYL9/MLC2. In concert with MYO18A and LRP35A, is involved in modulating lamellar actomyosin retrograde flow that is crucial to cell protrusion and migration. Phosphorylates: PPP1R12A and LIMK2. May play a role in TFRC-mediated iron uptake. In concert with FAM89B/LRAP25 mediates the targeting of LIMK1 to the lamellipodium resulting in its activation and subsequent phosphorylation of CFL1 which is important for lamellipodial F-actin regulation. Triggers the formation of an extrusion apical actin ring required for epithelial extrusion of apoptotic cells. The chain is Serine/threonine-protein kinase MRCK alpha (Cdc42bpa) from Mus musculus (Mouse).